Reading from the N-terminus, the 80-residue chain is Defensin-like protein 18 (80 aa).

Positions 1–29 (MAKFCTTITLILVALVLFADFEAPTIVKA) are cleaved as a signal peptide. 4 disulfides stabilise this stretch: C32–C80, C43–C64, C49–C74, and C53–C76.

The protein belongs to the DEFL family.

It localises to the secreted. Functionally, confers broad-spectrum resistance to pathogens. This is Defensin-like protein 18 (PDF1.5) from Arabidopsis thaliana (Mouse-ear cress).